The primary structure comprises 422 residues: MDPRQSRITELAIAIKKQTETLQSLLDSLKVATPSFSVNANQELPRNAAVQLAQSSILDSCTELQDLVEGPLAHVGRIMSPRVHISSALQAIVHFNIAEKIAKHETISFGEIAKRCKMDVDDVKRIMRLAISYRIFKESHIGFVNHTASSFLIAENLLVRQWISLCCDEFIPAGSFLVPAMKKWPSSEEPNETAFALLHKGDSLWEVLKKQPEKAQRFAHGMEYMRTLPPFDINHLFTSLNWEIDCEMVLVDVGGSQGSIAEALLRRHPRLRCYVQDLPETLSKAVVPKDLKGRLEFVSHSMFKEQPIKADVYLLRSILHDWLDGYALQIIRNLIPALEVGSKVIINEICLPEPNAISAYEAQLIRGYDLSMKQQFNSKERDVHEWETLFRLADRRFKLNRIVNPPGSFLAVLEFEWQPTTP.

D277 contributes to the S-adenosyl-L-methionine binding site. Catalysis depends on H320, which acts as the Proton acceptor.

This sequence belongs to the class I-like SAM-binding methyltransferase superfamily. Cation-independent O-methyltransferase family.

It participates in secondary metabolite biosynthesis. Functionally, O-methyltransferase; part of the gene cluster that mediates the biosynthesis of KK-1, a novel cyclic depsipeptide with 10 residues which is a promising active compound with high activity against many plant pathogens, especially Botrytis cinerea. Within the pathway, kk1A is responsible for the O-methylation of tyrosine as a free amino acid before its activation as an aminoacyl-AMP by the corresponding A domain of kk1B. The nonribosomal peptide synthetase (NRPS) kk1B catalyzes the elongation and cyclization of the decapeptide chain composed of 1 D-lactic acid residue (D-Lac), 1 pipecolic acid residue (Pip), 1 aspartic acid residue (Asp), 1 isoleucine residue (Ile), 1 glycine residue (Gly), 1 tyrosine residue (Tyr) and 4 valine residues (Val). The Asp, Ile and 3 Val residues are N-methylated by the 5 methyltransferase domains from the NRPS (found in modules 3, 5, 6, 7 and 9), whereas the Tyr residue is O-methylated by the cluster encoded O-methyltransferase kk1A. The thioesterase kk1J is likely to be involved in the corrective mechanism of peptide chain synthesis. The D-lactate dehydrogenase kk1H is involved in the synthesis of D-lactic acid from pyruvic acid, which is recognized by the A domain of the first kk1B module. The pyrroline-5-carboxylate reductase kk1I is involved in the synthesis of the L-pipecolic acid residue of KK-1 from delta-1-pyrroline-5-carboxylate (P5C), a metabolic intermediate of lysine. It is still unclear how kk1C and kk1D are involved in the production of KK-1. This chain is O-methyltransferase kk1A, found in Curvularia clavata.